The chain runs to 31 residues: Cycloviolacin-O6 (31 aa).

Positions glycine 1–asparagine 31 form a cross-link, cyclopeptide (Gly-Asn). Cystine bridges form between cysteine 5/cysteine 21, cysteine 9/cysteine 23, and cysteine 14/cysteine 28.

In terms of processing, this is a cyclic peptide.

Its function is as follows. Probably participates in a plant defense mechanism. The protein is Cycloviolacin-O6 of Viola odorata (Sweet violet).